Consider the following 333-residue polypeptide: Sodium/bile acid cotransporter 7 (333 aa).

The Cytoplasmic portion of the chain corresponds to 1 to 10 (MGLLERLRKE). The chain crosses the membrane as a helical span at residues 11-31 (WFIAGIALVIAAARLEPAVGV). The Extracellular portion of the chain corresponds to 32–37 (KGGPLK). A helical transmembrane segment spans residues 38 to 58 (PEITITYIAVSAIFFNSGLSL). The Cytoplasmic portion of the chain corresponds to 59-71 (KTEELTSALMHVK). A helical transmembrane segment spans residues 72–92 (LHLFVQIFTLVFFPTAIWLFL). Residues 93–103 (QLLSITPINEW) are Extracellular-facing. Residues 104-124 (LLKGLQTVGCMPPPVSSAVIL) traverse the membrane as a helical segment. The Cytoplasmic segment spans residues 125-126 (TK). A helical transmembrane segment spans residues 127 to 147 (AVGGNEAAAIFNSAFGSFLLG). At 148 to 151 (SSSS) the chain is on the extracellular side. A helical transmembrane segment spans residues 152–172 (VPFTSIFSQLFMTVVVPLIIG). Residues 173-189 (QIVRRYIKDWLERRKPP) are Cytoplasmic-facing. The chain crosses the membrane as a helical span at residues 190 to 210 (FGTISSCVLLMIIYTTFCDTF). Residues 211-222 (ANPNIDLDKFSL) are Extracellular-facing. A helical membrane pass occupies residues 223 to 243 (IIIVFIIFSVQMSFMFLTFLF). Over 244–258 (STRSNSGFTPADTVA) the chain is Cytoplasmic. Residues 259 to 279 (IIFCSTHKSLTLGIPMLKIVF) traverse the membrane as a helical segment. The Extracellular portion of the chain corresponds to 280–286 (AGYEHLS). The chain crosses the membrane as a helical span at residues 287-307 (LISVPLLIYHPAQILLGSLLV). The Cytoplasmic portion of the chain corresponds to 308–333 (PTIKSWMVSRQKALKLTRQPKVPVKV).

This sequence belongs to the bile acid:sodium symporter (BASS) (TC 2.A.28) family.

The protein localises to the cell membrane. It localises to the endoplasmic reticulum membrane. It is found in the golgi apparatus membrane. Functionally, involved in teeth and skeletal development. Has an essential role in the biosynthesis and trafficking of glycosaminoglycans and glycoproteins to produce a proper functioning extracellular matrix. Required for extracellular matrix mineralization. Also involved in the regulation of cellular calcium homeostasis. Does not show transport activity towards bile acids or steroid sulfates. The protein is Sodium/bile acid cotransporter 7 (SLC10A7) of Gallus gallus (Chicken).